We begin with the raw amino-acid sequence, 435 residues long: CUB and peptidase domain-containing protein 1 (435 aa).

A signal peptide spans 1-16 (SGFHLSFSFFRRAVCG). In terms of domain architecture, Peptidase S1 spans 25–261 (IVGGTVAPIN…LKSWITGKIS (237 aa)). C50 and C66 are joined by a disulfide. Residues H65 and D116 each act as charge relay system in the active site. 4 disulfide bridges follow: C151/C218, C182/C197, C208/C237, and C322/C341. S212 functions as the Charge relay system in the catalytic mechanism. In terms of domain architecture, CUB spans 256–378 (ITGKISRSPA…SGFHLSFSFF (123 aa)).

This sequence belongs to the peptidase S1 family. Component of the acid-insoluble organic matrix of the aragonitic skeleton (at protein level).

Its subcellular location is the secreted. This chain is CUB and peptidase domain-containing protein 1, found in Acropora millepora (Staghorn coral).